Reading from the N-terminus, the 194-residue chain is Myelin-associated neurite-outgrowth inhibitor (194 aa).

An N-acetylmethionine modification is found at M1. The Cytoplasmic portion of the chain corresponds to M1–K18. S6 carries the post-translational modification Phosphoserine. The helical transmembrane segment at G19–Y41 threads the bilayer. Residues P42 to S141 are Extracellular-facing. A glycan (N-linked (GlcNAc...) asparagine) is linked at N45. The helical transmembrane segment at G142 to A163 threads the bilayer. Residues H164–W194 are Cytoplasmic-facing.

Belongs to the FAM168 family. May form homodimers. May interact with DAZAP2, FAM168A, PRDX6, RBM6, TMTC1 and YPEL2. Interacts with CDC27. N-glycosylated. In terms of tissue distribution, predominantly expressed in the brain, including olfactory bulb, cortex and cerebellum (at protein level).

The protein resides in the cytoplasm. Its subcellular location is the perinuclear region. It localises to the cell membrane. The protein localises to the cell projection. It is found in the axon. Its function is as follows. Inhibitor of neuronal axonal outgrowth. Acts as a negative regulator of CDC42 and STAT3 and a positive regulator of STMN2. Positive regulator of CDC27. This is Myelin-associated neurite-outgrowth inhibitor (Fam168b) from Mus musculus (Mouse).